Consider the following 726-residue polypeptide: Phenylalanine--tRNA ligase beta subunit (726 aa).

The tRNA-binding domain occupies 38–150 (FSSSKGLLFA…NFASLNDDAS (113 aa)). In terms of domain architecture, B5 spans 394 to 467 (DKKVEINFDE…RFYNYDNFKE (74 aa)). Residues Asp445, Asp451, Glu454, and Glu455 each contribute to the Mg(2+) site.

It belongs to the phenylalanyl-tRNA synthetase beta subunit family. Type 1 subfamily. In terms of assembly, tetramer of two alpha and two beta subunits. The cofactor is Mg(2+).

It localises to the cytoplasm. It carries out the reaction tRNA(Phe) + L-phenylalanine + ATP = L-phenylalanyl-tRNA(Phe) + AMP + diphosphate + H(+). This Mycoplasmopsis synoviae (strain 53) (Mycoplasma synoviae) protein is Phenylalanine--tRNA ligase beta subunit.